We begin with the raw amino-acid sequence, 335 residues long: Transmembrane protein 120B-B (335 aa).

A coiled-coil region spans residues 1-39 (MSLQKCQEEWGELEKEFQQLQETHKVYKQKLEELSSLQN). 6 helical membrane passes run 100 to 116 (SLYLNLVLGNVNVTLLS), 130 to 150 (FKLYLTIILLLGAITCRFVLH), 157 to 177 (VFNFLLVWYFCTLTIRESILI), 193 to 213 (VSTFLSGVMLTWPDGLMYQMF), 268 to 288 (FLLPVLFFGHFWQLYNAMTLF), and 300 to 320 (QVFVLALTFLLLFLGNFLTTL).

The protein belongs to the TMEM120 family.

Its subcellular location is the nucleus inner membrane. Functionally, necessary for efficient adipogenesis. Does not show ion channel activity. The protein is Transmembrane protein 120B-B (tmem120b-b) of Xenopus laevis (African clawed frog).